We begin with the raw amino-acid sequence, 381 residues long: MPFSNSHNTLKLRFPAEDEFPDLSAHNNHMAKVLTPELYAELRAKSTPSGFTLDDVIQTGVDNPGHPYIMTVGCVAGDEESYDVFKELFDPIIEDRHGGYKPSDEHKTDLNPDNLQGGDDLDPNYVLSSRVRTGRSIRGFCLPPHCSRGERRAIEKLAVEALSSLDGDLAGRYYALKSMTEAEQQQLIDDHFLFDKPVSPLLLASGMARDWPDARGIWHNDNKTFLVWINEEDHLRVISMQKGGNMKEVFTRFCNGLTQIETLFKSKNYEFMWNPHLGYILTCPSNLGTGLRAGVHIKLPHLGKHEKFPEVLKRLRLQKRGTGGVDTAAVGGVFDVSNADRLGFSEVELVQMVVDGVKLLIEMEQRLEQGQAIDDLVPAQK.

Phosphoserine is present on Ser4. In terms of domain architecture, Phosphagen kinase N-terminal spans 11-98 (KLRFPAEDEF…FDPIIEDRHG (88 aa)). At Thr35 the chain carries Phosphothreonine. A Glycyl lysine isopeptide (Lys-Gly) (interchain with G-Cter in ubiquitin) cross-link involves residue Lys45. Position 72 (Val72) interacts with creatine. Residues 96–110 (RHGGYKPSDEHKTDL) are compositionally biased toward basic and acidic residues. Residues 96 to 123 (RHGGYKPSDEHKTDLNPDNLQGGDDLDP) are disordered. Residues Lys101 and Lys107 each participate in a glycyl lysine isopeptide (Lys-Gly) (interchain with G-Cter in ubiquitin) cross-link. At Tyr125 the chain carries Phosphotyrosine. The 243-residue stretch at 125 to 367 (YVLSSRVRTG…KLLIEMEQRL (243 aa)) folds into the Phosphagen kinase C-terminal domain. ATP is bound by residues 128–132 (SSRVR), Arg130, Arg132, and His191. The internal MTS-like signal stretch occupies residues 130–138 (RVRTGRSIR). At Ser199 the chain carries Phosphoserine. Glu232 provides a ligand contact to creatine. Arg236 is a binding site for ATP. Tyr269 is subject to 3'-nitrotyrosine. Ser285 lines the creatine pocket. ATP is bound by residues Arg292, Arg320, 320-325 (RGTGGV), and Asp335. Phosphothreonine is present on Thr322. Lys381 is covalently cross-linked (Glycyl lysine isopeptide (Lys-Gly) (interchain with G-Cter in ubiquitin)).

Belongs to the ATP:guanido phosphotransferase family. As to quaternary structure, dimer of identical or non-identical chains, which can be either B (brain type) or M (muscle type). With MM being the major form in skeletal muscle and myocardium, MB existing in myocardium, and BB existing in many tissues, especially brain. Interacts with SLC12A6 (via C-terminus); the interaction may be required for SLC12A6 potassium-chloride cotransport activity. In terms of processing, ubiquitinated by the ECS(ASB9) complex, leading to its degradation by the proteasome.

The protein localises to the cytoplasm. The protein resides in the cytosol. It localises to the mitochondrion. It is found in the cell membrane. The catalysed reaction is creatine + ATP = N-phosphocreatine + ADP + H(+). Reversibly catalyzes the transfer of phosphate between ATP and various phosphogens (e.g. creatine phosphate). Creatine kinase isoenzymes play a central role in energy transduction in tissues with large, fluctuating energy demands, such as skeletal muscle, heart, brain and spermatozoa. Acts as a key regulator of adaptive thermogenesis as part of the futile creatine cycle: localizes to the mitochondria of thermogenic fat cells and acts by mediating phosphorylation of creatine to initiate a futile cycle of creatine phosphorylation and dephosphorylation. During the futile creatine cycle, creatine and N-phosphocreatine are in a futile cycle, which dissipates the high energy charge of N-phosphocreatine as heat without performing any mechanical or chemical work. The protein is Creatine kinase B-type (CKB) of Canis lupus familiaris (Dog).